Consider the following 335-residue polypeptide: Biotin synthase (335 aa).

A Radical SAM core domain is found at 41–269; sequence KQIQVCKLIS…TSDVRLSAGR (229 aa). The [4Fe-4S] cluster site is built by Cys-56, Cys-60, and Cys-63. Positions 100, 132, 192, and 264 each coordinate [2Fe-2S] cluster.

The protein belongs to the radical SAM superfamily. Biotin synthase family. As to quaternary structure, homodimer. [4Fe-4S] cluster is required as a cofactor. It depends on [2Fe-2S] cluster as a cofactor.

It catalyses the reaction (4R,5S)-dethiobiotin + (sulfur carrier)-SH + 2 reduced [2Fe-2S]-[ferredoxin] + 2 S-adenosyl-L-methionine = (sulfur carrier)-H + biotin + 2 5'-deoxyadenosine + 2 L-methionine + 2 oxidized [2Fe-2S]-[ferredoxin]. The protein operates within cofactor biosynthesis; biotin biosynthesis; biotin from 7,8-diaminononanoate: step 2/2. Functionally, catalyzes the conversion of dethiobiotin (DTB) to biotin by the insertion of a sulfur atom into dethiobiotin via a radical-based mechanism. This is Biotin synthase from Nostoc sp. (strain PCC 7120 / SAG 25.82 / UTEX 2576).